Reading from the N-terminus, the 247-residue chain is 3-deoxy-manno-octulosonate cytidylyltransferase (247 aa).

Belongs to the KdsB family.

The protein localises to the cytoplasm. It catalyses the reaction 3-deoxy-alpha-D-manno-oct-2-ulosonate + CTP = CMP-3-deoxy-beta-D-manno-octulosonate + diphosphate. It functions in the pathway nucleotide-sugar biosynthesis; CMP-3-deoxy-D-manno-octulosonate biosynthesis; CMP-3-deoxy-D-manno-octulosonate from 3-deoxy-D-manno-octulosonate and CTP: step 1/1. Its pathway is bacterial outer membrane biogenesis; lipopolysaccharide biosynthesis. Activates KDO (a required 8-carbon sugar) for incorporation into bacterial lipopolysaccharide in Gram-negative bacteria. This is 3-deoxy-manno-octulosonate cytidylyltransferase from Methylobacterium sp. (strain 4-46).